Consider the following 109-residue polypeptide: Large ribosomal subunit protein uL22 (109 aa).

Belongs to the universal ribosomal protein uL22 family. In terms of assembly, part of the 50S ribosomal subunit.

This protein binds specifically to 23S rRNA; its binding is stimulated by other ribosomal proteins, e.g. L4, L17, and L20. It is important during the early stages of 50S assembly. It makes multiple contacts with different domains of the 23S rRNA in the assembled 50S subunit and ribosome. Functionally, the globular domain of the protein is located near the polypeptide exit tunnel on the outside of the subunit, while an extended beta-hairpin is found that lines the wall of the exit tunnel in the center of the 70S ribosome. The polypeptide is Large ribosomal subunit protein uL22 (Ralstonia pickettii (strain 12J)).